The primary structure comprises 487 residues: Multiple inositol polyphosphate phosphatase 1 (487 aa).

The signal sequence occupies residues 1–30 (MLRAPGCLLRTSVAPAAALAAALLSSLARC). Residue His-89 is part of the active site. 2 N-linked (GlcNAc...) asparagine glycosylation sites follow: Asn-242 and Asn-481. The Prevents secretion from ER motif lies at 484 to 487 (SDEL).

It belongs to the histidine acid phosphatase family. MINPP1 subfamily. In terms of processing, N-glycosylated. In terms of tissue distribution, widely expressed with highest levels in kidney, liver, cerebellum and placenta.

It is found in the endoplasmic reticulum lumen. It localises to the secreted. The protein resides in the cell membrane. The enzyme catalyses 1D-myo-inositol hexakisphosphate + H2O = 1D-myo-inositol 1,2,4,5,6-pentakisphosphate + phosphate. It carries out the reaction 1D-myo-inositol 1,2,4,5,6-pentakisphosphate + H2O = 1D-myo-inositol 1,2,5,6-tetrakisphosphate + phosphate. The catalysed reaction is 1D-myo-inositol 1,2,5,6-tetrakisphosphate + H2O = 1D-myo-inositol 1,2,6-trisphosphate + phosphate. It catalyses the reaction 1D-myo-inositol 1,2,6-trisphosphate + H2O = 1D-myo-inositol 1,2-bisphosphate + phosphate. The enzyme catalyses 1D-myo-inositol 1,2-bisphosphate + H2O = 1D-myo-inositol 2-phosphate + phosphate. It carries out the reaction 1D-myo-inositol hexakisphosphate + H2O = 1D-myo-inositol 1,2,3,5,6-pentakisphosphate + phosphate. The catalysed reaction is 1D-myo-inositol 1,2,3,5,6-pentakisphosphate + H2O = 1D-myo-inositol 1,2,3,6-tetrakisphosphate + phosphate. It catalyses the reaction 1D-myo-inositol 1,2,3,6-tetrakisphosphate + H2O = 1D-myo-inositol 1,2,3-trisphosphate + phosphate. The enzyme catalyses 1D-myo-inositol 1,2,3-trisphosphate + H2O = 1D-myo-inositol 2,3-bisphosphate + phosphate. It carries out the reaction 1D-myo-inositol 2,3-bisphosphate + H2O = 1D-myo-inositol 2-phosphate + phosphate. The catalysed reaction is 1D-myo-inositol 1,3,4,5,6-pentakisphosphate + H2O = 1D-myo-inositol 1,4,5,6-tetrakisphosphate + phosphate. It catalyses the reaction 1D-myo-inositol 1,4,5,6-tetrakisphosphate + H2O = 1D-myo-inositol 1,4,5-trisphosphate + phosphate. The enzyme catalyses (2R)-2,3-bisphosphoglycerate + H2O = (2R)-2-phosphoglycerate + phosphate. Its function is as follows. Multiple inositol polyphosphate phosphatase that hydrolyzes 1D-myo-inositol 1,3,4,5,6-pentakisphosphate (InsP5[2OH]) and 1D-myo-inositol hexakisphosphate (InsP6) to a range of less phosphorylated inositol phosphates. This regulates the availability of these various small molecule second messengers and metal chelators which control many aspects of cell physiology. Has a weak in vitro activity towards 1D-myo-inositol 1,4,5-trisphosphate which is unlikely to be physiologically relevant. By regulating intracellular inositol polyphosphates pools, which act as metal chelators, it may control the availability of intracellular calcium and iron, which are important for proper neuronal development and homeostasis. May have a dual substrate specificity, and function as a 2,3-bisphosphoglycerate 3-phosphatase hydrolyzing 2,3-bisphosphoglycerate to 2-phosphoglycerate. 2,3-bisphosphoglycerate (BPG) is formed as part of the Rapoport-Luebering glycolytic bypass and is a regulator of systemic oxygen homeostasis as the major allosteric effector of hemoglobin. The sequence is that of Multiple inositol polyphosphate phosphatase 1 from Homo sapiens (Human).